A 352-amino-acid chain; its full sequence is MDYQVSSPTYDIDYYTSEPCQKINVKQIAARLLPPLYSLVFIFGFVGNILVVLILINCKRLKSMTDIYLLNLAISDLLFLLTVPFWAHYAAAQWDFGNTMCQLLTGLYFIGFFSGIFFIILLTIDRYLAIVHAVFALKARTVTFGVVTSVITWVVAVFASLPRIIFTTSHRERLHYTCSSHFPYSQYQFWKNFHTLKIVILGLVLPLLVMVICYSGILKTLLRCRNEKKRHRAVRLIFTIMIVYFLFWAPYNIVLLLNTFQEFFGLNNCSSSNRLDQAMQVTETLGMTHCCINPIIYAFVGEKFRNYLLVFFQKHIAKRFCKCCSIFQQEAPERASSVYTRSTGEQEISVGL.

At 1–30 (MDYQVSSPTYDIDYYTSEPCQKINVKQIAA) the chain is on the extracellular side. Residue Tyr3 is modified to Sulfotyrosine. O-linked (GalNAc...) serine glycans are attached at residues Ser6 and Ser7. 3 positions are modified to sulfotyrosine: Tyr10, Tyr14, and Tyr15. Intrachain disulfides connect Cys20-Cys269 and Cys101-Cys178. The helical transmembrane segment at 31–58 (RLLPPLYSLVFIFGFVGNILVVLILINC) threads the bilayer. The Cytoplasmic segment spans residues 59-68 (KRLKSMTDIY). A helical membrane pass occupies residues 69–89 (LLNLAISDLLFLLTVPFWAHY). Residues 90 to 102 (AAAQWDFGNTMCQ) are Extracellular-facing. Residues 103-124 (LLTGLYFIGFFSGIFFIILLTI) form a helical membrane-spanning segment. Residues 125–141 (DRYLAIVHAVFALKART) are Cytoplasmic-facing. The chain crosses the membrane as a helical span at residues 142–166 (VTFGVVTSVITWVVAVFASLPRIIF). Residues 167-198 (TTSHRERLHYTCSSHFPYSQYQFWKNFHTLKI) lie on the Extracellular side of the membrane. A helical transmembrane segment spans residues 199–218 (VILGLVLPLLVMVICYSGIL). Over 219 to 235 (KTLLRCRNEKKRHRAVR) the chain is Cytoplasmic. The helical transmembrane segment at 236–260 (LIFTIMIVYFLFWAPYNIVLLLNTF) threads the bilayer. Residues 261 to 277 (QEFFGLNNCSSSNRLDQ) are Extracellular-facing. The helical transmembrane segment at 278 to 301 (AMQVTETLGMTHCCINPIIYAFVG) threads the bilayer. At 302 to 352 (EKFRNYLLVFFQKHIAKRFCKCCSIFQQEAPERASSVYTRSTGEQEISVGL) the chain is on the cytoplasmic side. Residues Cys321, Cys323, and Cys324 are each lipidated (S-palmitoyl cysteine). Ser336, Ser337, Ser342, and Ser349 each carry phosphoserine; by BARK1.

Belongs to the G-protein coupled receptor 1 family. In terms of assembly, interacts with PRAF2. Efficient ligand binding to CCL3/MIP-1alpha and CCL4/MIP-1beta requires sulfation, O-glycosylation and sialic acid modifications. Glycosylation on Ser-6 is required for efficient binding of CCL4. Interacts with GRK2. Interacts with ARRB1 and ARRB2. Interacts with CNIH4. Interacts with S100A4; this interaction stimulates T-lymphocyte chemotaxis. Post-translationally, sulfated on at least 2 of the N-terminal tyrosines. Sulfation is required for efficient binding of the chemokines, CCL3 and CCL4. Palmitoylation in the C-terminal is important for cell surface expression. In terms of processing, phosphorylation on serine residues in the C-terminal is stimulated by binding CC chemokines especially by APO-RANTES. Post-translationally, O-glycosylated, but not N-glycosylated. Ser-6 appears to be the major site even if Ser-7 may be also O-glycosylated. Also sialylated glycans present which contribute to chemokine binding. Thr-16 and Ser-17 may also be glycosylated and, if so, with small moieties such as a T-antigen.

The protein resides in the cell membrane. Its function is as follows. Receptor for a number of inflammatory CC-chemokines including CCL3/MIP-1-alpha, CCL4/MIP-1-beta and RANTES and subsequently transduces a signal by increasing the intracellular calcium ion level. May play a role in the control of granulocytic lineage proliferation or differentiation. Participates in T-lymphocyte migration to the infection site by acting as a chemotactic receptor. The polypeptide is C-C chemokine receptor type 5 (CCR5) (Cercopithecus ascanius (Black-cheeked white-nosed monkey)).